A 168-amino-acid chain; its full sequence is Crossover junction endodeoxyribonuclease RuvC (168 aa).

Catalysis depends on residues aspartate 8, glutamate 68, and aspartate 140. Mg(2+)-binding residues include aspartate 8, glutamate 68, and aspartate 140.

The protein belongs to the RuvC family. As to quaternary structure, homodimer which binds Holliday junction (HJ) DNA. The HJ becomes 2-fold symmetrical on binding to RuvC with unstacked arms; it has a different conformation from HJ DNA in complex with RuvA. In the full resolvosome a probable DNA-RuvA(4)-RuvB(12)-RuvC(2) complex forms which resolves the HJ. The cofactor is Mg(2+).

It localises to the cytoplasm. It catalyses the reaction Endonucleolytic cleavage at a junction such as a reciprocal single-stranded crossover between two homologous DNA duplexes (Holliday junction).. In terms of biological role, the RuvA-RuvB-RuvC complex processes Holliday junction (HJ) DNA during genetic recombination and DNA repair. Endonuclease that resolves HJ intermediates. Cleaves cruciform DNA by making single-stranded nicks across the HJ at symmetrical positions within the homologous arms, yielding a 5'-phosphate and a 3'-hydroxyl group; requires a central core of homology in the junction. The consensus cleavage sequence is 5'-(A/T)TT(C/G)-3'. Cleavage occurs on the 3'-side of the TT dinucleotide at the point of strand exchange. HJ branch migration catalyzed by RuvA-RuvB allows RuvC to scan DNA until it finds its consensus sequence, where it cleaves and resolves the cruciform DNA. The chain is Crossover junction endodeoxyribonuclease RuvC from Gluconobacter oxydans (strain 621H) (Gluconobacter suboxydans).